A 188-amino-acid polypeptide reads, in one-letter code: Elongation factor P (188 aa).

Belongs to the elongation factor P family.

The protein resides in the cytoplasm. Its pathway is protein biosynthesis; polypeptide chain elongation. Involved in peptide bond synthesis. Stimulates efficient translation and peptide-bond synthesis on native or reconstituted 70S ribosomes in vitro. Probably functions indirectly by altering the affinity of the ribosome for aminoacyl-tRNA, thus increasing their reactivity as acceptors for peptidyl transferase. The protein is Elongation factor P of Rickettsia bellii (strain OSU 85-389).